A 325-amino-acid chain; its full sequence is Chain length determinant protein (325 aa).

Over 1–31 (MRVENNNVSGQNHDPEQIDLIDLLVQLWRGK) the chain is Cytoplasmic. Residues 32 to 52 (MTIIISVIVAIALAIGYLAVA) traverse the membrane as a helical segment. The Periplasmic portion of the chain corresponds to 53 to 294 (KEKWTSTAII…LPIRRDSPKK (242 aa)). Residues 295–315 (AITLILAVLLGGMVGAGIVLG) traverse the membrane as a helical segment. Residues 316-325 (RNALRNYNAK) lie on the Cytoplasmic side of the membrane.

Belongs to the WzzB/Cld/Rol family.

The protein resides in the cell inner membrane. It functions in the pathway bacterial outer membrane biogenesis; lipopolysaccharide biosynthesis. Functionally, confers a modal distribution of chain length on the O-antigen component of lipopolysaccharide (LPS). Gives rise to a reduced number of short chain molecules and increases in numbers of longer molecules, with a modal value of 13 (in strain O111/M92) and of 17 (in strain K12). The polypeptide is Chain length determinant protein (wzzB) (Escherichia coli).